The primary structure comprises 148 residues: MRTVILGVIGSDAHVVGITILERAFEAAGFNVVNLGVQSSQSEFIDAADEHDAEAILVSSLYGHAEQDCQGFQQQINEAGLDVTTYIGGNLAVGQDSFEETRETFKALGFDRVFNSETDPEEAIEALKADLGHRSREEASSEKVQLGS.

In terms of domain architecture, B12-binding spans 1 to 134; the sequence is MRTVILGVIG…EALKADLGHR (134 aa). Adenosylcob(III)alamin contacts are provided by residues 11-15, His-14, 59-61, and 90-94; these read SDAHV, SSL, and NLAVG. Positions 129 to 141 are enriched in basic and acidic residues; the sequence is ADLGHRSREEASS. The interval 129 to 148 is disordered; it reads ADLGHRSREEASSEKVQLGS.

Belongs to the methylaspartate mutase GlmS subunit family. Heterotetramer composed of 2 epsilon subunits (GlmE) and 2 sigma subunits (GlmS). GlmE exists as a homodimer and GlmS as a monomer. Adenosylcob(III)alamin is required as a cofactor.

It carries out the reaction (2S,3S)-3-methyl-L-aspartate = L-glutamate. The protein operates within amino-acid degradation; L-glutamate degradation via mesaconate pathway; acetate and pyruvate from L-glutamate: step 1/4. Its function is as follows. Catalyzes the carbon skeleton rearrangement of L-glutamate to L-threo-3-methylaspartate ((2S,3S)-3-methylaspartate). The chain is Glutamate mutase sigma subunit 2 from Haloarcula marismortui (strain ATCC 43049 / DSM 3752 / JCM 8966 / VKM B-1809) (Halobacterium marismortui).